An 876-amino-acid chain; its full sequence is Probable inactive ATP-dependent zinc metalloprotease FTSHI 2, chloroplastic (876 aa).

The tract at residues 1–20 (MACRFPLHSSSPSQFLSPEN) is disordered. The N-terminal 32 residues, 1–32 (MACRFPLHSSSPSQFLSPENRQRLPRNYPSIS), are a transit peptide targeting the chloroplast. The segment covering 8-19 (HSSSPSQFLSPE) has biased composition (polar residues). A helical transmembrane segment spans residues 59–79 (LLAIPITLTIISASLAKPSFA). Residues 256–276 (TMKAQKKQQERKKRKAVRKKK) are disordered. A compositionally biased stretch (basic residues) spans 258 to 275 (KAQKKQQERKKRKAVRKK). Residues 304–324 (VATALGLVFFYIFYRVVVLNY) traverse the membrane as a helical segment. Residues 350-370 (ELEREMEGIEEEDEEVEEGTG) are disordered. Residues 357-368 (GIEEEDEEVEEG) show a composition bias toward acidic residues. 450-457 (GPPGVGKT) serves as a coordination point for ATP.

It in the N-terminal section; belongs to the AAA ATPase family. The protein in the C-terminal section; belongs to the peptidase M41 family. Homooligomer. Interacts with FtsHi4.

It is found in the plastid. The protein resides in the chloroplast membrane. In terms of biological role, required for plastid development during embryogenesis. Might be involved in chaperone functions or play a structural role in the thylakoid FtsH complex. The sequence is that of Probable inactive ATP-dependent zinc metalloprotease FTSHI 2, chloroplastic from Arabidopsis thaliana (Mouse-ear cress).